Consider the following 253-residue polypeptide: Phycoerythrobilin:ferredoxin oxidoreductase (253 aa).

Belongs to the HY2 family.

The catalysed reaction is (3Z)-phycoerythrobilin + oxidized 2[4Fe-4S]-[ferredoxin] = 15,16-dihydrobiliverdin + reduced 2[4Fe-4S]-[ferredoxin] + 2 H(+). In terms of biological role, catalyzes the two-electron reduction of the C2 and C3(1) diene system of 15,16-dihydrobiliverdin. The polypeptide is Phycoerythrobilin:ferredoxin oxidoreductase (Prochlorococcus marinus (strain MIT 9301)).